The chain runs to 128 residues: D-ribose pyranase (128 aa).

The Proton donor role is filled by His20. Substrate is bound by residues Asp28, His95, and 117 to 119 (YSN).

This sequence belongs to the RbsD / FucU family. RbsD subfamily. Homodecamer.

It is found in the cytoplasm. The enzyme catalyses beta-D-ribopyranose = beta-D-ribofuranose. Its pathway is carbohydrate metabolism; D-ribose degradation; D-ribose 5-phosphate from beta-D-ribopyranose: step 1/2. Catalyzes the interconversion of beta-pyran and beta-furan forms of D-ribose. The chain is D-ribose pyranase from Thermosipho africanus (strain TCF52B).